The chain runs to 155 residues: D-aminoacyl-tRNA deacylase (155 aa).

The Gly-cisPro motif, important for rejection of L-amino acids motif lies at 137 to 138; that stretch reads GP.

This sequence belongs to the DTD family. In terms of assembly, homodimer.

The protein localises to the cytoplasm. It catalyses the reaction glycyl-tRNA(Ala) + H2O = tRNA(Ala) + glycine + H(+). The catalysed reaction is a D-aminoacyl-tRNA + H2O = a tRNA + a D-alpha-amino acid + H(+). Its function is as follows. An aminoacyl-tRNA editing enzyme that deacylates mischarged D-aminoacyl-tRNAs. Also deacylates mischarged glycyl-tRNA(Ala), protecting cells against glycine mischarging by AlaRS. Acts via tRNA-based rather than protein-based catalysis; rejects L-amino acids rather than detecting D-amino acids in the active site. By recycling D-aminoacyl-tRNA to D-amino acids and free tRNA molecules, this enzyme counteracts the toxicity associated with the formation of D-aminoacyl-tRNA entities in vivo and helps enforce protein L-homochirality. This Roseiflexus sp. (strain RS-1) protein is D-aminoacyl-tRNA deacylase.